A 374-amino-acid chain; its full sequence is MAMKKKISTSSIMPDWSQLPEELLHIISTHLEDHYFDAVHARSVCRSWRSTFPFPSSLLRQSYSLPAFPLESKDLCCTLEKVPLFLFRVLTPPDAADASSEYFLGGLGQDKSNDHVELPSPLQCSVKVNVPGTEPILMNMLDCQIIPLGHKYRLMIGCNPEEYSAAFLPLNEQGGGGEFVALLDCTDLFLVLRSTEMRWIRLEKPSTASCKELFTFRGRFYATFFNGDTFVIDPSSLEATPLTPHIDSNFLVPSGNEELFLVKTDFLRCRVSRLDEEAAEWVEVSDLGDRVLFLGGHLGNFYCSAKELPHGCGLTGDSILFTVGSRNVTYPYKYGVHTNKRKAEDNINCWRSSRENRVLFRNRYDPVLSFRVER.

In terms of domain architecture, F-box spans proline 14–tyrosine 63. 2 Kelch repeats span residues serine 100 to histidine 150 and asparagine 249 to phenylalanine 301.

The chain is F-box/kelch-repeat protein At2g24250 from Arabidopsis thaliana (Mouse-ear cress).